The chain runs to 409 residues: tRNA(Met) cytidine acetate ligase (409 aa).

ATP is bound by residues 7 to 20 (VVEY…HLYH), Gly102, Asn169, and Arg194.

This sequence belongs to the TmcAL family.

The protein resides in the cytoplasm. It carries out the reaction cytidine(34) in elongator tRNA(Met) + acetate + ATP = N(4)-acetylcytidine(34) in elongator tRNA(Met) + AMP + diphosphate. In terms of biological role, catalyzes the formation of N(4)-acetylcytidine (ac(4)C) at the wobble position of elongator tRNA(Met), using acetate and ATP as substrates. First activates an acetate ion to form acetyladenylate (Ac-AMP) and then transfers the acetyl group to tRNA to form ac(4)C34. This is tRNA(Met) cytidine acetate ligase from Clostridium botulinum (strain Langeland / NCTC 10281 / Type F).